We begin with the raw amino-acid sequence, 370 residues long: Phosphate-binding protein PstS2 (370 aa).

The signal sequence occupies residues 1–22 (MKFARSGAAVSLLAAGTLVLTA). Residue Cys23 is the site of N-palmitoyl cysteine attachment. A lipid anchor (S-diacylglycerol cysteine) is attached at Cys23. Phosphate-binding positions include 54 to 56 (STA), Ser84, Asp102, and 191 to 193 (SGT).

It belongs to the PstS family. The complex is composed of two ATP-binding proteins (PstB), two transmembrane proteins (PstC and PstA) and a solute-binding protein (PstS).

The protein localises to the cell membrane. It is found in the secreted. Functions in inorganic phosphate uptake, a phosphate-binding protein, although probably not the main uptake protein under phosphate starvation. Part of the ABC transporter complex PstSACB involved in phosphate import. The protein is Phosphate-binding protein PstS2 (pstS2) of Mycobacterium bovis (strain BCG / Pasteur 1173P2).